We begin with the raw amino-acid sequence, 187 residues long: Elongation factor P (187 aa).

This sequence belongs to the elongation factor P family.

The protein resides in the cytoplasm. It participates in protein biosynthesis; polypeptide chain elongation. Functionally, involved in peptide bond synthesis. Stimulates efficient translation and peptide-bond synthesis on native or reconstituted 70S ribosomes in vitro. Probably functions indirectly by altering the affinity of the ribosome for aminoacyl-tRNA, thus increasing their reactivity as acceptors for peptidyl transferase. This chain is Elongation factor P, found in Corynebacterium kroppenstedtii (strain DSM 44385 / JCM 11950 / CIP 105744 / CCUG 35717).